Here is a 691-residue protein sequence, read N- to C-terminus: Threonine--tRNA ligase (691 aa).

The segment at 1 to 22 (MSVPAQPAPGADGGDPRQPIRV) is disordered. The region spanning 1–73 (MSVPAQPAPG…DADAEVTPIA (73 aa)) is the TGS domain. A catalytic region spans residues 268 to 574 (DHRKLGVELD…LTEHYAGAFP (307 aa)). 3 residues coordinate Zn(2+): Cys373, His424, and His551.

This sequence belongs to the class-II aminoacyl-tRNA synthetase family. As to quaternary structure, homodimer. Zn(2+) serves as cofactor.

It is found in the cytoplasm. The enzyme catalyses tRNA(Thr) + L-threonine + ATP = L-threonyl-tRNA(Thr) + AMP + diphosphate + H(+). In terms of biological role, catalyzes the attachment of threonine to tRNA(Thr) in a two-step reaction: L-threonine is first activated by ATP to form Thr-AMP and then transferred to the acceptor end of tRNA(Thr). Also edits incorrectly charged L-seryl-tRNA(Thr). This is Threonine--tRNA ligase from Mycobacterium ulcerans (strain Agy99).